The sequence spans 142 residues: gSG7 salivary protein (142 aa).

The first 25 residues, 1 to 25 (METKLVLALIACGVICLLQTTPTEA), serve as a signal peptide directing secretion. Intrachain disulfides connect cysteine 83–cysteine 138 and cysteine 106–cysteine 116.

In terms of assembly, interacts with host coagulation factor XII (F12) (inactive and activated). Interacts with host high molecular weight kininogen (KNG1) (inactive and activated).

The protein localises to the secreted. With respect to regulation, zn(2+) modulates binding to host coagulation factor XII (F12) and high molecular weight kininogen (KNG1). Functionally, salivary protein with anticoagulant activity. Inhibits activation of host kallikrein-kinin system by preventing the reciprocal activation of coagulation factor XII (F12) and prekallikrein (KLKB1), and subsequent release of bradykinin. Inhibits host factor XII and high molecular weight kininogen (KNG1) binding to negatively charged surfaces. Weakly inhibits the alternative pathway of complement system activation in the host. The chain is gSG7 salivary protein from Anopheles stephensi (Indo-Pakistan malaria mosquito).